The chain runs to 399 residues: Octopine dehydrogenase (399 aa).

NADH-binding positions include G10–G13 and F35–E38. Pyruvate-binding residues include Q118 and T143. Q118 is a binding site for substrate. C148 lines the NAD(+) pocket. M206 provides a ligand contact to L-arginine. Pyruvate is bound at residue H212. The active site involves H212. NAD(+) is bound at residue R324.

Belongs to the lysopine/nopaline/octopine/opine/vitopine dehydrogenases family.

The catalysed reaction is D-octopine + NAD(+) + H2O = L-arginine + pyruvate + NADH + H(+). With respect to regulation, agmatine acts as a competitive inhibitor of the condensation reaction where the L-arginine and agmatine substrates compete for the same site. Its function is as follows. Catalyzes the reverse reaction of octopine dehydrogenation. Acts on L-arginine in preference to other substrates such as canavanine, cysteine, L-alanine, ornithine or norvaline, owing to the presence of the positively charged guanidium group. The polypeptide is Octopine dehydrogenase (Pecten maximus (King scallop)).